The chain runs to 142 residues: RNA polymerase-binding transcription factor DksA (142 aa).

Disordered stretches follow at residues 1–20 (MQTATVLVEKSDYRPSEDEP), 51–70 (HLQKETENHADLADRASSET), and 119–142 (RPTATMSVEAQERHERRERVHRDD). A dksA C4-type zinc finger spans residues 104 to 128 (CEETGEPIGLARLEARPTATMSVEA). Basic and acidic residues predominate over residues 128–142 (AQERHERRERVHRDD).

The protein belongs to the DksA family. As to quaternary structure, interacts directly with the RNA polymerase.

The protein resides in the cytoplasm. Transcription factor that acts by binding directly to the RNA polymerase (RNAP). Required for negative regulation of rRNA expression and positive regulation of several amino acid biosynthesis promoters. The polypeptide is RNA polymerase-binding transcription factor DksA (Caulobacter vibrioides (strain ATCC 19089 / CIP 103742 / CB 15) (Caulobacter crescentus)).